The chain runs to 419 residues: Interferon regulatory factor 3 (419 aa).

Residue threonine 3 is modified to Phosphothreonine. A DNA-binding region (IRF tryptophan pentad repeat) is located at residues 5–111 (KPRILPWLVS…DPHKVYEFVT (107 aa)). A Phosphoserine modification is found at serine 14. The residue at position 75 (threonine 75) is a Phosphothreonine. A phosphoserine mark is found at serine 97, serine 123, and serine 135. A mediates interaction with ZDHHC11 region spans residues 140 to 419 (PKLFDGLILG…DMDFQATGNI (280 aa)). A Glycyl lysine isopeptide (Lys-Gly) (interchain with G-Cter in ISG15) cross-link involves residue lysine 188. The tract at residues 194 to 353 (EQWEFEVTAF…MWPQDQPWVK (160 aa)) is interaction with HERC5. Threonine 230, threonine 237, and threonine 246 each carry phosphothreonine. Glycyl lysine isopeptide (Lys-Gly) (interchain with G-Cter in ISG15) cross-links involve residues lysine 353 and lysine 359. Lysine 359 carries the N6-acetyllysine modification. The residue at position 378 (serine 378) is a Phosphoserine. A Diphosphoserine modification is found at serine 379. The residue at position 379 (serine 379) is a Phosphoserine; by TBK1. Position 388 is a phosphoserine; by IKKE (serine 388). A Phosphoserine modification is found at serine 390. Threonine 396 carries the post-translational modification Phosphothreonine.

This sequence belongs to the IRF family. Monomer. Homodimer; phosphorylation-induced. Interacts (when phosphorylated) with CREBBP. Interacts with MAVS (via phosphorylated pLxIS motif). Interacts with TICAM1 (via phosphorylated pLxIS motif). Interacts with STING1 (via phosphorylated pLxIS motif). Interacts with IKBKE and TBK1. Interacts with TICAM2. Interacts with RBCK1. Interacts with HERC5. Interacts with DDX3X; the interaction allows the phosphorylation and activation of IRF3 by IKBKE. Interacts with TRIM21 and ULK1, in the presence of TRIM21; this interaction leads to IRF3 degradation by autophagy. Interacts with RIOK3; RIOK3 probably mediates the interaction of TBK1 with IRF3. Interacts with ILRUN; the interaction inhibits IRF3 binding to its DNA consensus sequence. Interacts with LYAR; this interaction impairs IRF3 DNA-binding activity. Interacts with TRAF3. Interacts with ZDHHC11; ZDHHC11 recruits IRF3 to STING1 upon DNA virus infection and thereby promotes IRF3 activation. Interacts with HSP90AA1; the interaction mediates IRF3 association with TOMM70. Interacts with BCL2; the interaction decreases upon Sendai virus infection. Interacts with BAX; the interaction is direct, increases upon virus infection and mediates the formation of the apoptosis complex TOMM70:HSP90AA1:IRF3:BAX. Interacts with DDX56. Interacts with NBR1. Post-translationally, constitutively phosphorylated on many Ser/Thr residues. Activated following phosphorylation by TBK1 and IKBKE. Innate adapter proteins, such as MAVS, STING1 or TICAM1, are first activated by viral RNA, cytosolic DNA, and bacterial lipopolysaccharide (LPS), respectively, leading to activation of the kinases TBK1 and IKBKE. These kinases then phosphorylate the adapter proteins on the pLxIS motif, leading to recruitment of IRF3, thereby licensing IRF3 for phosphorylation by TBK1. Phosphorylation at Ser-379 is followed by pyrophosphorylation at the same residue, promoting phosphorylation at Ser-388. Phosphorylated IRF3 dissociates from the adapter proteins, dimerizes, and then enters the nucleus to induce IFNs. Pyrophosphorylated by UAP1 following phosphorylation at Ser-379 by TBK1. Pyrophosphorylation promotes subsequent phosphorylation at Ser-388, leading to homodimerization of IRF3. In terms of processing, acetylation at Lys-359 by KAT8 inhibits recruimtent to promoters and transcription factor activity. Acetylation by KAT8 is promoted by phosphorylation at Ser-388. Post-translationally, ubiquitinated; ubiquitination involves RBCK1 leading to proteasomal degradation. Polyubiquitinated; ubiquitination involves TRIM21 leading to proteasomal degradation. Ubiquitinated by UBE3C, leading to its degradation. Deubiquitinated by USP5 on both 'Lys-48'-linked unanchored and 'Lys-63'-linked anchored polyubiquitin, leading to inhibition of anti-RNA viral innate immunity. ISGylated by HERC5 resulting in sustained IRF3 activation and in the inhibition of IRF3 ubiquitination by disrupting PIN1 binding. The phosphorylation state of IRF3 does not alter ISGylation. In terms of processing, proteolytically cleaved by apoptotic caspases during apoptosis, leading to its inactivation. Cleavage by CASP3 during virus-induced apoptosis inactivates it, preventing cytokine overproduction.

The protein localises to the cytoplasm. It is found in the nucleus. It localises to the mitochondrion. With respect to regulation, in the absence of viral infection, maintained as a monomer in an autoinhibited state. Phosphorylation by TBK1 and IKBKE disrupts this autoinhibition leading to the liberation of the DNA-binding and dimerization activities and its nuclear localization where it can activate type I IFN and ISG genes. Phosphorylation and activation follow the following steps: innate adapter proteins, such as MAVS, STING1 or TICAM1, are first activated by viral RNA, cytosolic DNA and bacterial lipopolysaccharide (LPS), respectively, leading to activation of the kinases TBK1 and IKBKE. These kinases then phosphorylate the adapter proteins on their pLxIS motif, leading to recruitment of IRF3, thereby licensing IRF3 for phosphorylation by TBK1. Phosphorylated IRF3 dissociates from the adapter proteins, dimerizes, and then enters the nucleus to induce IFNs. Its function is as follows. Key transcriptional regulator of type I interferon (IFN)-dependent immune responses which plays a critical role in the innate immune response against DNA and RNA viruses. Regulates the transcription of type I IFN genes (IFN-alpha and IFN-beta) and IFN-stimulated genes (ISG) by binding to an interferon-stimulated response element (ISRE) in their promoters. Acts as a more potent activator of the IFN-beta (IFNB) gene than the IFN-alpha (IFNA) gene and plays a critical role in both the early and late phases of the IFNA/B gene induction. Found in an inactive form in the cytoplasm of uninfected cells and following viral infection, double-stranded RNA (dsRNA), or toll-like receptor (TLR) signaling, is phosphorylated by IKBKE and TBK1 kinases. This induces a conformational change, leading to its dimerization and nuclear localization and association with CREB binding protein (CREBBP) to form dsRNA-activated factor 1 (DRAF1), a complex which activates the transcription of the type I IFN and ISG genes. Can activate distinct gene expression programs in macrophages and can induce significant apoptosis in primary macrophages. The chain is Interferon regulatory factor 3 (Irf3) from Mus musculus (Mouse).